We begin with the raw amino-acid sequence, 165 residues long: 6,7-dimethyl-8-ribityllumazine synthase 2 (165 aa).

Residues Trp24, 56–58 (SFE), and 80–82 (LVV) contribute to the 5-amino-6-(D-ribitylamino)uracil site. The active-site Proton donor is Arg88. Ser113 is a 5-amino-6-(D-ribitylamino)uracil binding site. His127 is a (2S)-2-hydroxy-3-oxobutyl phosphate binding site.

Belongs to the DMRL synthase family.

It catalyses the reaction (2S)-2-hydroxy-3-oxobutyl phosphate + 5-amino-6-(D-ribitylamino)uracil = 6,7-dimethyl-8-(1-D-ribityl)lumazine + phosphate + 2 H2O + H(+). It functions in the pathway cofactor biosynthesis; riboflavin biosynthesis; riboflavin from 2-hydroxy-3-oxobutyl phosphate and 5-amino-6-(D-ribitylamino)uracil: step 1/2. Functionally, catalyzes the formation of 6,7-dimethyl-8-ribityllumazine by condensation of 5-amino-6-(D-ribitylamino)uracil with 3,4-dihydroxy-2-butanone 4-phosphate. This is the penultimate step in the biosynthesis of riboflavin. The protein is 6,7-dimethyl-8-ribityllumazine synthase 2 of Bradyrhizobium diazoefficiens (strain JCM 10833 / BCRC 13528 / IAM 13628 / NBRC 14792 / USDA 110).